We begin with the raw amino-acid sequence, 576 residues long: Eukaryotic translation initiation factor 2A (576 aa).

WD repeat units follow at residues leucine 71 to serine 119, aspartate 266 to isoleucine 307, proline 308 to threonine 349, and valine 351 to glutamate 396. Disordered stretches follow at residues serine 422–threonine 461 and glycine 475–lysine 505. A compositionally biased stretch (polar residues) spans glycine 475–glutamine 486.

Belongs to the WD repeat EIF2A family.

The protein localises to the cytoplasm. Functionally, functions in the early steps of protein synthesis of a small number of specific mRNAs. Acts by directing the binding of methionyl-tRNAi to 40S ribosomal subunits. In contrast to the eIF-2 complex, it binds methionyl-tRNAi to 40S subunits in a codon-dependent manner, whereas the eIF-2 complex binds methionyl-tRNAi to 40S subunits in a GTP-dependent manner. This Schizosaccharomyces pombe (strain 972 / ATCC 24843) (Fission yeast) protein is Eukaryotic translation initiation factor 2A.